Consider the following 100-residue polypeptide: Large ribosomal subunit protein uL23 (100 aa).

It belongs to the universal ribosomal protein uL23 family. Part of the 50S ribosomal subunit. Contacts protein L29, and trigger factor when it is bound to the ribosome.

In terms of biological role, one of the early assembly proteins it binds 23S rRNA. One of the proteins that surrounds the polypeptide exit tunnel on the outside of the ribosome. Forms the main docking site for trigger factor binding to the ribosome. This is Large ribosomal subunit protein uL23 from Thermotoga neapolitana (strain ATCC 49049 / DSM 4359 / NBRC 107923 / NS-E).